We begin with the raw amino-acid sequence, 238 residues long: 3-dehydroquinate dehydratase (238 aa).

3-dehydroquinate-binding positions include 35–37 and Arg68; that span reads ELR. The active-site Proton donor/acceptor is His131. The active-site Schiff-base intermediate with substrate is the Lys158. Arg200 and Gln223 together coordinate 3-dehydroquinate.

Belongs to the type-I 3-dehydroquinase family. In terms of assembly, homodimer.

It carries out the reaction 3-dehydroquinate = 3-dehydroshikimate + H2O. It functions in the pathway metabolic intermediate biosynthesis; chorismate biosynthesis; chorismate from D-erythrose 4-phosphate and phosphoenolpyruvate: step 3/7. Involved in the third step of the chorismate pathway, which leads to the biosynthesis of aromatic amino acids. Catalyzes the cis-dehydration of 3-dehydroquinate (DHQ) and introduces the first double bond of the aromatic ring to yield 3-dehydroshikimate. The protein is 3-dehydroquinate dehydratase of Staphylococcus epidermidis (strain ATCC 35984 / DSM 28319 / BCRC 17069 / CCUG 31568 / BM 3577 / RP62A).